Reading from the N-terminus, the 215-residue chain is Cytochrome b6 (215 aa).

A helical transmembrane segment spans residues 32–52 (IFYCLGGITLTCFLVQVATGF). C35 provides a ligand contact to heme c. Heme b is bound by residues H86 and H100. The next 3 membrane-spanning stretches (helical) occupy residues 90-110 (ASMM…TGGF), 116-136 (LTWV…VTGY), and 186-206 (LHTF…FLMI). Positions 187 and 202 each coordinate heme b.

The protein belongs to the cytochrome b family. PetB subfamily. As to quaternary structure, the 4 large subunits of the cytochrome b6-f complex are cytochrome b6, subunit IV (17 kDa polypeptide, PetD), cytochrome f and the Rieske protein, while the 4 small subunits are PetG, PetL, PetM and PetN. The complex functions as a dimer. Requires heme b as cofactor. Heme c is required as a cofactor.

The protein localises to the plastid. Its subcellular location is the chloroplast thylakoid membrane. Functionally, component of the cytochrome b6-f complex, which mediates electron transfer between photosystem II (PSII) and photosystem I (PSI), cyclic electron flow around PSI, and state transitions. This chain is Cytochrome b6, found in Morus indica (Mulberry).